Reading from the N-terminus, the 143-residue chain is Transcriptional regulator MraZ (143 aa).

SpoVT-AbrB domains follow at residues 5 to 47 (EFRH…PMNE) and 76 to 119 (ASEC…SQEK).

It belongs to the MraZ family. Forms oligomers.

It is found in the cytoplasm. The protein localises to the nucleoid. The protein is Transcriptional regulator MraZ of Natranaerobius thermophilus (strain ATCC BAA-1301 / DSM 18059 / JW/NM-WN-LF).